The following is a 220-amino-acid chain: MAKQEYKQLPKRAEVHSATEQFKDTIKTSLGLDLFKGLGLTIKEFFSPSVTIHYPMEQLPLSPRYRAVHNLQRLLDSGSERCIGCGLCEKICTSNCIRIITHKGEDNRKKIDSYTINLGRCIYCGLCAEVCPELAIVMGNRFENASTQRSQYGSKSEFLTSEQDAKNCSHAEFLGFGAVSPNYNERMQATPLDYVQEPSKEESKEETPTNPESNKGDENV.

4Fe-4S ferredoxin-type domains lie at 71 to 102 (LQRL…IITH) and 112 to 141 (DSYT…MGNR). Residues Cys82, Cys85, Cys88, Cys92, Cys121, Cys124, Cys127, and Cys131 each contribute to the [4Fe-4S] cluster site. The interval 187–220 (MQATPLDYVQEPSKEESKEETPTNPESNKGDENV) is disordered. A compositionally biased stretch (basic and acidic residues) spans 198-207 (PSKEESKEET).

The protein belongs to the complex I 23 kDa subunit family. NDH-1 is composed of 14 different subunits. Subunits NuoA, H, J, K, L, M, N constitute the membrane sector of the complex. It depends on [4Fe-4S] cluster as a cofactor.

It is found in the cell inner membrane. It carries out the reaction a quinone + NADH + 5 H(+)(in) = a quinol + NAD(+) + 4 H(+)(out). NDH-1 shuttles electrons from NADH, via FMN and iron-sulfur (Fe-S) centers, to quinones in the respiratory chain. The immediate electron acceptor for the enzyme in this species is believed to be ubiquinone. Couples the redox reaction to proton translocation (for every two electrons transferred, four hydrogen ions are translocated across the cytoplasmic membrane), and thus conserves the redox energy in a proton gradient. This Helicobacter pylori (strain Shi470) protein is NADH-quinone oxidoreductase subunit I.